We begin with the raw amino-acid sequence, 218 residues long: Enhancer of split M2 protein (218 aa).

Positions 1 to 25 are enriched in low complexity; it reads MYLDTKNLTASSTSALTAATASNSK. 3 disordered regions span residues 1-30, 64-86, and 137-164; these read MYLDTKNLTASSTSALTAATASNSKSTRRM, NTQQQQQQQQQELLIEDDTKSTP, and GRNCQHRHHSSSNINSSSSSSNMNSSSA. Low complexity predominate over residues 147–163; sequence SSNINSSSSSSNMNSSS.

Its function is as follows. Part of the Notch signaling pathway. This Drosophila melanogaster (Fruit fly) protein is Enhancer of split M2 protein.